The primary structure comprises 326 residues: Nuclear egress protein 1 (326 aa).

The CCCH-type zinc-finger motif lies at 115 to 244 (CLSLSGMGYY…YAVFPTKSVH (130 aa)).

This sequence belongs to the herpesviridae NEC1 protein family. Forms a heterohexameric complex with NEC2. Interacts with capsid vertex specific component 2/CVC2; this interaction directs the capsid to the host inner nuclear membrane to initiate budding. Post-translationally, phosphorylated at serine residues in the N-terminus. This phosphorylation regulates the localization within the inner nuclear membrane.

Its subcellular location is the host nucleus inner membrane. Functionally, plays an essential role in virion nuclear egress, the first step of virion release from infected cell. Within the host nucleus, NEC1 interacts with the newly formed capsid through the vertexes and directs it to the inner nuclear membrane by associating with NEC2. Induces the budding of the capsid at the inner nuclear membrane as well as its envelopment into the perinuclear space. There, the NEC1/NEC2 complex promotes the fusion of the enveloped capsid with the outer nuclear membrane and the subsequent release of the viral capsid into the cytoplasm where it will reach the secondary budding sites in the host Golgi or trans-Golgi network. The polypeptide is Nuclear egress protein 1 (Equine herpesvirus 1 (strain Ab4p) (EHV-1)).